Reading from the N-terminus, the 675-residue chain is DNA ligase (675 aa).

Residues 35–39 (DAVYD), 84–85 (SL), and Glu118 each bind NAD(+). Lys120 serves as the catalytic N6-AMP-lysine intermediate. Residues Arg141, Glu178, Lys295, and Lys319 each contribute to the NAD(+) site. 4 residues coordinate Zn(2+): Cys413, Cys416, Cys431, and Cys436. The 78-residue stretch at 598-675 (GAIGALTGQT…DEAELKALLS (78 aa)) folds into the BRCT domain.

It belongs to the NAD-dependent DNA ligase family. LigA subfamily. It depends on Mg(2+) as a cofactor. Mn(2+) is required as a cofactor.

The catalysed reaction is NAD(+) + (deoxyribonucleotide)n-3'-hydroxyl + 5'-phospho-(deoxyribonucleotide)m = (deoxyribonucleotide)n+m + AMP + beta-nicotinamide D-nucleotide.. Its function is as follows. DNA ligase that catalyzes the formation of phosphodiester linkages between 5'-phosphoryl and 3'-hydroxyl groups in double-stranded DNA using NAD as a coenzyme and as the energy source for the reaction. It is essential for DNA replication and repair of damaged DNA. In Synechococcus sp. (strain RCC307), this protein is DNA ligase.